The chain runs to 320 residues: Nucleotide-binding protein Psyc_0118 (320 aa).

An ATP-binding site is contributed by 32–39 (GRSGSGKT). 82–85 (DIRT) lines the GTP pocket.

Belongs to the RapZ-like family.

Functionally, displays ATPase and GTPase activities. The protein is Nucleotide-binding protein Psyc_0118 of Psychrobacter arcticus (strain DSM 17307 / VKM B-2377 / 273-4).